We begin with the raw amino-acid sequence, 250 residues long: Coproheme decarboxylase (250 aa).

Fe-coproporphyrin III contacts are provided by residues arginine 131, 145 to 149 (YPMNK), histidine 172, and glutamine 185. Tyrosine 145 is an active-site residue.

Belongs to the ChdC family. Type 1 subfamily. The cofactor is Fe-coproporphyrin III.

The catalysed reaction is Fe-coproporphyrin III + 2 H2O2 + 2 H(+) = heme b + 2 CO2 + 4 H2O. It carries out the reaction Fe-coproporphyrin III + H2O2 + H(+) = harderoheme III + CO2 + 2 H2O. It catalyses the reaction harderoheme III + H2O2 + H(+) = heme b + CO2 + 2 H2O. The protein operates within porphyrin-containing compound metabolism; protoheme biosynthesis. Its function is as follows. Involved in coproporphyrin-dependent heme b biosynthesis. Catalyzes the decarboxylation of Fe-coproporphyrin III (coproheme) to heme b (protoheme IX), the last step of the pathway. The reaction occurs in a stepwise manner with a three-propionate intermediate. The protein is Coproheme decarboxylase of Staphylococcus aureus (strain USA300 / TCH1516).